The chain runs to 524 residues: Protein hunchback (524 aa).

Disordered stretches follow at residues 42–86 and 101–187; these read IVKR…PQTQ and YNHN…DEQS. Positions 59–75 are enriched in low complexity; it reads SGSDFHSSSPSSDTSQD. Residues 76–86 are compositionally biased toward polar residues; it reads LQHSYQSPQTQ. Basic and acidic residues-rich tracts occupy residues 118 to 127, 138 to 154, and 164 to 178; these read KSEKEEKDME, RKPD…EMSL, and TSEH…KSDN. 4 consecutive C2H2-type zinc fingers follow at residues 202–224, 231–253, 259–281, and 298–311; these read FKCK…SKVH, LTCP…LRNH, FQCN…MKSH, and YCHS…RYGH. Residues 402–442 are disordered; sequence DLSKPGCSYTGEQKSRRKGPAFKVDPTQVESEEEDEETSTT. 2 C2H2-type zinc fingers span residues 471–493 and 499–523; these read NSCQ…MGYH and FTCN…RVSH.

This sequence belongs to the hunchback C2H2-type zinc-finger protein family.

The protein resides in the nucleus. In terms of biological role, gap class segmentation protein that controls development of head structures. In Tribolium castaneum (Red flour beetle), this protein is Protein hunchback (hb).